Here is a 180-residue protein sequence, read N- to C-terminus: Ribosome maturation factor RimM (180 aa).

The PRC barrel domain maps to 103-176 (GDIWWDRDLV…RIVVDPPPGL (74 aa)).

This sequence belongs to the RimM family. In terms of assembly, binds ribosomal protein uS19.

It localises to the cytoplasm. Its function is as follows. An accessory protein needed during the final step in the assembly of 30S ribosomal subunit, possibly for assembly of the head region. Essential for efficient processing of 16S rRNA. May be needed both before and after RbfA during the maturation of 16S rRNA. It has affinity for free ribosomal 30S subunits but not for 70S ribosomes. The protein is Ribosome maturation factor RimM of Frankia alni (strain DSM 45986 / CECT 9034 / ACN14a).